Here is a 316-residue protein sequence, read N- to C-terminus: MFARAPFVRLLSTTSRNLAEAEKKVSKEALMALRKKTGYSYVNCRKALIQFGENDMDSAVKWLKEAAAKEGWAKAAKLGTRVTSNGLVSVVTDNSTAAVVELSCETDFVARSGAFKDLLSNISNSVLAKAKPQSISSGSKLQEFTYDLGDLTDSDGKNMREVLSLSIGKLGENMTVRRVKAFKAPEGTTLFGASHPKDGTDDIPMGRFISLIALNQSSPGSISSQQLAGQICQHIIGMSPESLGEAAESVKTQEGLRSQEGHDPNADPVVVTNIDESETALLRQAFMLNPSQSVHEYLKSHNANILDFVRVELGSE.

The N-terminal 18 residues, Met1–Leu18, are a transit peptide targeting the mitochondrion. The segment at Glu245–Val269 is disordered.

It belongs to the EF-Ts family.

The protein resides in the mitochondrion. Functionally, associates with the EF-Tu.GDP complex and induces the exchange of GDP to GTP. It remains bound to the aminoacyl-tRNA.EF-Tu.GTP complex up to the GTP hydrolysis stage on the ribosome. The protein is Elongation factor Ts, mitochondrial of Caenorhabditis elegans.